An 828-amino-acid polypeptide reads, in one-letter code: Sarcolemmal membrane-associated protein (828 aa).

The tract at residues 1–163 (MPSALAIFTC…AANTPSMYSQ (163 aa)) is necessary for targeting to centrosomes. Residues 1 to 802 (MPSALAIFTC…REKGNNKPWP (802 aa)) are Cytoplasmic-facing. An FHA domain is found at 28-85 (IKIGRSVARCRPAQNNATFDCKVLSRNHALVWFDHKTGKFYLQDTKSSNGTFINSQRL). Ser148 carries the post-translational modification Phosphoserine. Coiled coils occupy residues 167–202 (QLSQ…ASDT) and 230–388 (NQTE…QEKT). Residues 339-359 (KKELQHKIDEMEEKEQELQAK) traverse the membrane as a helical; Anchor for type IV membrane protein segment. Basic and acidic residues predominate over residues 433–446 (KLSKENQTRAKESD). The disordered stretch occupies residues 433–467 (KLSKENQTRAKESDFSDTLSPSKEKSSDDTTDAQM). Ser448 and Ser452 each carry phosphoserine. Residues 477-799 (AKVSLLKDDL…KLLREKGNNK (323 aa)) are a coiled coil. A helical; Anchor for type IV membrane protein membrane pass occupies residues 803–823 (WMPMLAALVAVTAIVLYVPGL). Over 824–828 (ARASP) the chain is Extracellular.

The protein belongs to the SLMAP family. As to quaternary structure, homodimer. Interacts with myosin. Interacts with SIKE1 and both associate with the STRIPAK core complex composed of PP2A catalytic and scaffolding subunits, the striatins (PP2A regulatory subunits), the striatin-associated proteins MOB4, STRIP1 and STRIP2, PDCD10 and members of the STE20 kinases, such as STK24 and STK26. Interacts (via FHA domain) with STK3 (when phosphorylated); the interaction associates STK3 with the STRIPAK complex.

It is found in the cell membrane. It localises to the sarcolemma. The protein localises to the cytoplasm. Its subcellular location is the myofibril. The protein resides in the sarcomere. It is found in the m line. It localises to the z line. The protein localises to the cytoskeleton. Its subcellular location is the microtubule organizing center. The protein resides in the centrosome. It is found in the endoplasmic reticulum membrane. It localises to the mitochondrion membrane. Its function is as follows. Associates with the striatin-interacting phosphatase and kinase (STRIPAK) core complex, forming the extended (SIKE1:SLMAP)STRIPAK complex. The (SIKE1:SLMAP)STRIPAK complex dephosphorylates STK3 leading to the inhibition of Hippo signaling and the control of cell growth. May play a role during myoblast fusion. The chain is Sarcolemmal membrane-associated protein from Homo sapiens (Human).